A 1011-amino-acid chain; its full sequence is CRM-domain containing factor CFM2, chloroplastic (1011 aa).

A chloroplast-targeting transit peptide spans 1-45 (MLLPLFHQQPLILAKTFPDRIFPPFLVPNTLVSRRNVSRANSGIF). A compositionally biased stretch (basic and acidic residues) spans 77–90 (HDSPTRRITGEESG). The interval 77–96 (HDSPTRRITGEESGKNSPGE) is disordered. CRM domains are found at residues 164 to 260 (LTLP…YFVS), 376 to 473 (PKLT…AVSS), and 577 to 677 (EGIT…QCLR). Disordered regions lie at residues 721-810 (DSAT…GNSL) and 841-872 (LNANRKLPGSSTGSGSQISALRERKSENDGLV). Residues 722 to 736 (SATNETWSDGESSNM) show a composition bias toward polar residues. Over residues 743 to 757 (ENQHTEPEKAREKIE) the composition is skewed to basic and acidic residues. The segment covering 762 to 771 (SDLSVPSSGE) has biased composition (polar residues). A compositionally biased stretch (acidic residues) spans 772–782 (ENWEDDSEGEV). Residues 849-859 (GSSTGSGSQIS) are compositionally biased toward polar residues. Positions 873-972 (TDLSNRERLI…WGAEEEMKSF (100 aa)) constitute a CRM 4 domain.

Interacts with RNA. Part of large ribonucleo-protein particles that contain CAF1 and/or CAF2.

Its subcellular location is the plastid. The protein localises to the chloroplast stroma. Binds specific group II introns in chloroplasts and facilitates their splicing. Acts on both subgroup IIA and subgroup IIB introns. The substrates of the subgroup IIB also require the CRM domain proteins CAF1 or CAF2, with a simultaneous binding of CFM2 and CAF1 or CAF2. Can bind to and promote the splicing of the single group I intron in chloroplast tRNA transcript of trnL-UAA gene. The chain is CRM-domain containing factor CFM2, chloroplastic from Arabidopsis thaliana (Mouse-ear cress).